A 210-amino-acid chain; its full sequence is N-(5'-phosphoribosyl)anthranilate isomerase (210 aa).

This sequence belongs to the TrpF family.

The enzyme catalyses N-(5-phospho-beta-D-ribosyl)anthranilate = 1-(2-carboxyphenylamino)-1-deoxy-D-ribulose 5-phosphate. Its pathway is amino-acid biosynthesis; L-tryptophan biosynthesis; L-tryptophan from chorismate: step 3/5. This is N-(5'-phosphoribosyl)anthranilate isomerase from Pseudomonas fluorescens (strain ATCC BAA-477 / NRRL B-23932 / Pf-5).